The sequence spans 360 residues: Photosystem II protein D1 2 (360 aa).

Transmembrane regions (helical) follow at residues 29–46 (YIGW…TAVT), 118–133 (HYMI…QWEY), and 142–156 (WICV…ATYS). His-118 serves as a coordination point for chlorophyll a. Tyr-126 is a pheophytin a binding site. [CaMn4O5] cluster is bound by residues Asp-170 and Glu-189. The chain crosses the membrane as a helical span at residues 197–218 (FHMFGVAGVLGGSLFAAMHGSL). Chlorophyll a is bound at residue His-198. Residues His-215 and 264–265 (SF) each bind a quinone. Residue His-215 participates in Fe cation binding. His-272 is a binding site for Fe cation. The helical transmembrane segment at 274 to 288 (FLGAWPVVCIWLTAM) threads the bilayer. 4 residues coordinate [CaMn4O5] cluster: His-332, Glu-333, Asp-342, and Ala-344. The propeptide occupies 345 to 360 (AGESAPVALTAPVING).

It belongs to the reaction center PufL/M/PsbA/D family. PSII is composed of 1 copy each of membrane proteins PsbA, PsbB, PsbC, PsbD, PsbE, PsbF, PsbH, PsbI, PsbJ, PsbK, PsbL, PsbM, PsbT, PsbX, PsbY, PsbZ, Psb30/Ycf12, peripheral proteins PsbO, CyanoQ (PsbQ), PsbU, PsbV and a large number of cofactors. It forms dimeric complexes. Requires The D1/D2 heterodimer binds P680, chlorophylls that are the primary electron donor of PSII, and subsequent electron acceptors. It shares a non-heme iron and each subunit binds pheophytin, quinone, additional chlorophylls, carotenoids and lipids. D1 provides most of the ligands for the Mn4-Ca-O5 cluster of the oxygen-evolving complex (OEC). There is also a Cl(-1) ion associated with D1 and D2, which is required for oxygen evolution. The PSII complex binds additional chlorophylls, carotenoids and specific lipids. as cofactor. Tyr-161 forms a radical intermediate that is referred to as redox-active TyrZ, YZ or Y-Z. In terms of processing, C-terminally processed by CtpA; processing is essential to allow assembly of the oxygen-evolving complex and thus photosynthetic growth.

The protein localises to the cellular thylakoid membrane. The catalysed reaction is 2 a plastoquinone + 4 hnu + 2 H2O = 2 a plastoquinol + O2. Its function is as follows. Photosystem II (PSII) is a light-driven water:plastoquinone oxidoreductase that uses light energy to abstract electrons from H(2)O, generating O(2) and a proton gradient subsequently used for ATP formation. It consists of a core antenna complex that captures photons, and an electron transfer chain that converts photonic excitation into a charge separation. The D1/D2 (PsbA/PsbD) reaction center heterodimer binds P680, the primary electron donor of PSII as well as several subsequent electron acceptors. This Acaryochloris marina (strain MBIC 11017) protein is Photosystem II protein D1 2.